A 607-amino-acid polypeptide reads, in one-letter code: ATP-dependent rRNA helicase SPB4 (607 aa).

Residues 7–35 carry the Q motif motif; it reads WDDLEYPIQPWIRSAVDVMGFENMTPVQA. The Helicase ATP-binding domain occupies 38–224; it reads IPLFARNKDV…KTGLRNPVKV (187 aa). 51 to 58 contributes to the ATP binding site; the sequence is SVTGSGKT. A DEAD box motif is present at residues 172–175; the sequence is DEAD. The region spanning 248 to 404 is the Helicase C-terminal domain; it reads KLEQVISIIN…EISLDIVNLP (157 aa). Residues 527-607 are disordered; the sequence is KSELKKKNMS…NGMQGSFDDL (81 aa). Positions 529-565 form a coiled coil; the sequence is ELKKKNMSWSNNTQSKEEKVERRTKMALKRKRIEEEL. Composition is skewed to basic and acidic residues over residues 543-552 and 560-570; these read SKEEKVERRT and RIEEELSKEAD. The segment covering 587-601 has biased composition (polar residues); sequence ILQNKKSKNSNNGMQ.

The protein belongs to the DEAD box helicase family. DDX55/SPB4 subfamily. Component of pre-60S ribosomal complexes.

It localises to the nucleus. Its subcellular location is the nucleolus. It carries out the reaction ATP + H2O = ADP + phosphate + H(+). Its function is as follows. ATP-binding RNA helicase involved in the biogenesis of 60S ribosomal subunits. Binds 90S pre-ribosomal particles and dissociates from pre-60S ribosomal particles after processing of 27SB pre-rRNA. Required for the normal formation of 18S rRNA through the processing of pre-rRNAs at sites A0, A1 and A2, and the normal formation of 25S and 5.8S rRNAs through the processing of pre-rRNAs at sites C1 and C2. The polypeptide is ATP-dependent rRNA helicase SPB4 (Vanderwaltozyma polyspora (strain ATCC 22028 / DSM 70294 / BCRC 21397 / CBS 2163 / NBRC 10782 / NRRL Y-8283 / UCD 57-17) (Kluyveromyces polysporus)).